Consider the following 433-residue polypeptide: Adenylosuccinate synthetase (433 aa).

Residues 11-17 (GDEGKGK) and 39-41 (GHT) each bind GTP. The active-site Proton acceptor is Asp12. Positions 12 and 39 each coordinate Mg(2+). Residues 12–15 (DEGK), 37–40 (NAGH), Thr134, Arg148, Asn230, Thr245, and Arg309 contribute to the IMP site. The active-site Proton donor is His40. A substrate-binding site is contributed by 305 to 311 (VTTGRKR). GTP contacts are provided by residues Arg311, 337–339 (KLD), and 419–421 (GTG).

This sequence belongs to the adenylosuccinate synthetase family. Homodimer. It depends on Mg(2+) as a cofactor.

The protein localises to the cytoplasm. The enzyme catalyses IMP + L-aspartate + GTP = N(6)-(1,2-dicarboxyethyl)-AMP + GDP + phosphate + 2 H(+). The protein operates within purine metabolism; AMP biosynthesis via de novo pathway; AMP from IMP: step 1/2. In terms of biological role, plays an important role in the de novo pathway and in the salvage pathway of purine nucleotide biosynthesis. Catalyzes the first committed step in the biosynthesis of AMP from IMP. This chain is Adenylosuccinate synthetase, found in Saccharomyces cerevisiae (strain Lalvin EC1118 / Prise de mousse) (Baker's yeast).